The primary structure comprises 411 residues: Arginine deiminase (411 aa).

C401 (amidino-cysteine intermediate) is an active-site residue.

Belongs to the arginine deiminase family.

The protein localises to the cytoplasm. It carries out the reaction L-arginine + H2O = L-citrulline + NH4(+). The protein operates within amino-acid degradation; L-arginine degradation via ADI pathway; carbamoyl phosphate from L-arginine: step 1/2. The polypeptide is Arginine deiminase (Streptococcus pyogenes serotype M49 (strain NZ131)).